A 326-amino-acid chain; its full sequence is MAFTPFPPRQPTASARLPLTLMTLDDWALATITGADSEKYMQGQVTADVSQMTENQHLLAAHCDAKGKMWSNLRLFRDGDGFAWIERRSVREPQLTELKKYAVFSKVTIAADDERVLLGVAGFQARAALANLFSELPSREKQVVKEGATTLLWFEHPAERFLIVTDEATANMLTDKLRGEAELNNSQQWLALNIEAGFPVIDAANSGQFIPQATNLQALGGISFKKGCYTGQEMVARAKFRGANKRALWLLAGSASRLPEAGEDLELKMGENWRRTGTVLAAVKLEDGQVVVQVVMNNDMEPDSIFRVRDDANTLHIEPLPYSLEE.

Folate contacts are provided by Trp27 and Trp189.

Belongs to the tRNA-modifying YgfZ family.

It localises to the cytoplasm. Functionally, folate-binding protein involved in regulating the level of ATP-DnaA and in the modification of some tRNAs. It is probably a key factor in regulatory networks that act via tRNA modification, such as initiation of chromosomal replication. This is tRNA-modifying protein YgfZ from Shigella boydii serotype 4 (strain Sb227).